A 357-amino-acid chain; its full sequence is Arginine kinase (357 aa).

Positions 9 to 91 (KLEAGFKKLQ…FDPIIDDYHG (83 aa)) constitute a Phosphagen kinase N-terminal domain. 64–68 (GVGIY) contributes to the substrate binding site. Residues 119 to 356 (FIISTRVRCG…LEMIKMEKAA (238 aa)) enclose the Phosphagen kinase C-terminal domain. ATP is bound by residues 122–126 (STRVR) and His185. Residue Glu225 participates in substrate binding. Arg229 contributes to the ATP binding site. Cys271 serves as a coordination point for substrate. Residues 280-284 (RASVH) and 309-314 (RGTRGE) each bind ATP. Glu314 serves as a coordination point for substrate.

It belongs to the ATP:guanido phosphotransferase family. Monomer.

It localises to the cytoplasm. It carries out the reaction L-arginine + ATP = N(omega)-phospho-L-arginine + ADP + H(+). Functionally, catalyzes the reversible transfer of the terminal phosphoryl group of ATP to L-arginine. The polypeptide is Arginine kinase (Limulus polyphemus (Atlantic horseshoe crab)).